Here is a 386-residue protein sequence, read N- to C-terminus: 8-amino-7-oxononanoate synthase (386 aa).

A substrate-binding site is contributed by Arg-19. 106 to 107 (GY) is a binding site for pyridoxal 5'-phosphate. Residue His-131 coordinates substrate. Positions 177, 205, and 233 each coordinate pyridoxal 5'-phosphate. Lys-236 is subject to N6-(pyridoxal phosphate)lysine. A substrate-binding site is contributed by Thr-350.

It belongs to the class-II pyridoxal-phosphate-dependent aminotransferase family. BioF subfamily. As to quaternary structure, homodimer. Requires pyridoxal 5'-phosphate as cofactor.

The enzyme catalyses 6-carboxyhexanoyl-[ACP] + L-alanine + H(+) = (8S)-8-amino-7-oxononanoate + holo-[ACP] + CO2. The protein operates within cofactor biosynthesis; biotin biosynthesis. Its function is as follows. Catalyzes the decarboxylative condensation of pimeloyl-[acyl-carrier protein] and L-alanine to produce 8-amino-7-oxononanoate (AON), [acyl-carrier protein], and carbon dioxide. The sequence is that of 8-amino-7-oxononanoate synthase from Alcanivorax borkumensis (strain ATCC 700651 / DSM 11573 / NCIMB 13689 / SK2).